Consider the following 512-residue polypeptide: Sucrose transport protein SUC2 (512 aa).

Over Met-1 to Lys-31 the chain is Cytoplasmic. The chain crosses the membrane as a helical span at residues Ile-32–Leu-52. Over Leu-53–Lys-65 the chain is Extracellular. A helical membrane pass occupies residues Trp-66–Gly-86. The Cytoplasmic portion of the chain corresponds to Tyr-87 to Arg-100. The chain crosses the membrane as a helical span at residues Pro-101 to Ala-121. The Extracellular segment spans residues Asp-122 to Arg-138. The chain crosses the membrane as a helical span at residues Ala-139–Gly-159. The Cytoplasmic portion of the chain corresponds to Pro-160–Arg-177. Residues Thr-178–Gly-198 traverse the membrane as a helical segment. Topologically, residues Ser-199 to Lys-223 are extracellular. The helical transmembrane segment at Thr-224–Val-244 threads the bilayer. The Cytoplasmic portion of the chain corresponds to Lys-245–Pro-278. The helical transmembrane segment at Met-279–Phe-299 threads the bilayer. The Extracellular portion of the chain corresponds to Asp-300–Gly-332. The helical transmembrane segment at Ala-333–Ile-353 threads the bilayer. The Cytoplasmic segment spans residues Gly-354–Arg-362. The chain crosses the membrane as a helical span at residues Leu-363–Lys-383. The Extracellular portion of the chain corresponds to Gln-384 to Ala-407. An N-linked (GlcNAc...) asparagine glycan is attached at Asn-402. A helical transmembrane segment spans residues Leu-408 to Leu-428. Residues Ala-429–Gln-440 are Cytoplasmic-facing. The chain crosses the membrane as a helical span at residues Gly-441–Gly-461. Residues Gly-462–Asn-473 lie on the Extracellular side of the membrane. The chain crosses the membrane as a helical span at residues Ile-474–Val-494. The Cytoplasmic segment spans residues Leu-495 to His-512.

Belongs to the glycoside-pentoside-hexuronide (GPH) cation symporter transporter (TC 2.A.2.4) family. In terms of assembly, homodimer. Interacts with SUC3 and SUC4. In terms of tissue distribution, expressed in leaves and, to a lower extent, in roots, flowers and stems. Highly specific to the phloem, exclusively localized in companion cells (at protein level).

The protein resides in the cell membrane. The catalysed reaction is sucrose(out) + H(+)(out) = sucrose(in) + H(+)(in). Its pathway is glycan biosynthesis; sucrose metabolism. Its activity is regulated as follows. Inhibited by protonophores (e.g. dinitrophenol and carbonyl cyanide m-chlorophenyl-hydrazone (CCCP)) and SH group inhibitors (e.g. N-ethylmaleimide (NEM) and p-chloromercuriphenyl sulphonic acid (PCMPS)). Its function is as follows. Responsible for the transport of sucrose into the cell, with the concomitant uptake of protons (symport system). Can also transport other glucosides such as maltose, arbutin (hydroquinone-beta-D-glucoside), salicin (2-(hydroxymethyl)phenyl-beta-D-glucoside), alpha-phenylglucoside, beta-phenylglucoside, alpha-paranitrophenylglucoside, beta-paranitrophenylglucoside, and paranitrophenyl-beta-thioglucoside. May also transport biotin. Required for apoplastic phloem sucrose loading in source tissues (e.g. leaves) in order to transport it to sink tissues (e.g. roots, flowers). In Arabidopsis thaliana (Mouse-ear cress), this protein is Sucrose transport protein SUC2.